The following is a 182-amino-acid chain: Ribosome maturation factor RimM (182 aa).

The PRC barrel domain occupies 103–182; that stretch reads EDEFYWRELF…RIEVDWDPGF (80 aa).

It belongs to the RimM family. In terms of assembly, binds ribosomal protein uS19.

It is found in the cytoplasm. Its function is as follows. An accessory protein needed during the final step in the assembly of 30S ribosomal subunit, possibly for assembly of the head region. Essential for efficient processing of 16S rRNA. May be needed both before and after RbfA during the maturation of 16S rRNA. It has affinity for free ribosomal 30S subunits but not for 70S ribosomes. In Vibrio campbellii (strain ATCC BAA-1116), this protein is Ribosome maturation factor RimM.